Here is a 525-residue protein sequence, read N- to C-terminus: GMP synthase [glutamine-hydrolyzing] (525 aa).

The 199-residue stretch at 9–207 (RILILDFGSQ…VRDICQCEAL (199 aa)) folds into the Glutamine amidotransferase type-1 domain. C86 functions as the Nucleophile in the catalytic mechanism. Catalysis depends on residues H181 and E183. In terms of domain architecture, GMPS ATP-PPase spans 208–400 (WTPAKIIDDA…LGLPYDMLYR (193 aa)). ATP is bound at residue 235–241 (SGGVDSS).

In terms of assembly, homodimer.

The enzyme catalyses XMP + L-glutamine + ATP + H2O = GMP + L-glutamate + AMP + diphosphate + 2 H(+). It participates in purine metabolism; GMP biosynthesis; GMP from XMP (L-Gln route): step 1/1. Catalyzes the synthesis of GMP from XMP. This is GMP synthase [glutamine-hydrolyzing] from Salmonella schwarzengrund (strain CVM19633).